The primary structure comprises 828 residues: Periplasmic nitrate reductase (828 aa).

The segment at residues 1-31 (MKLSRRSFMKANAVAAAAAAAGLSVPGVARA) is a signal peptide (tat-type signal). The 4Fe-4S Mo/W bis-MGD-type domain occupies 39-95 (IKWDKAPCRFCGTGCGVLVGTQQGRVVACQGDPDAPVNRGLNCIKGYFLPKIMYGKD). Residues Cys46, Cys49, Cys53, and Cys81 each coordinate [4Fe-4S] cluster. Mo-bis(molybdopterin guanine dinucleotide) contacts are provided by residues Lys83, Gln150, Asn175, Cys179, 212 to 219 (WGSNMAEM), 243 to 247 (STFQH), 262 to 264 (QSD), Met372, Gln376, Asn482, 508 to 509 (SD), Lys531, Asp558, and 718 to 727 (TGRVLEHWHT). Residue Phe794 participates in substrate binding. Asn802 and Lys819 together coordinate Mo-bis(molybdopterin guanine dinucleotide).

Belongs to the prokaryotic molybdopterin-containing oxidoreductase family. NasA/NapA/NarB subfamily. Component of the periplasmic nitrate reductase NapAB complex composed of NapA and NapB. It depends on [4Fe-4S] cluster as a cofactor. Requires Mo-bis(molybdopterin guanine dinucleotide) as cofactor. Predicted to be exported by the Tat system. The position of the signal peptide cleavage has not been experimentally proven.

It is found in the periplasm. The catalysed reaction is 2 Fe(II)-[cytochrome] + nitrate + 2 H(+) = 2 Fe(III)-[cytochrome] + nitrite + H2O. Catalytic subunit of the periplasmic nitrate reductase complex NapAB. Receives electrons from NapB and catalyzes the reduction of nitrate to nitrite. The protein is Periplasmic nitrate reductase of Salmonella paratyphi A (strain ATCC 9150 / SARB42).